The primary structure comprises 560 residues: Hemocyanin, units G and H (560 aa).

A disulfide bridge connects residues Cys1 and Cys11. The unit G stretch occupies residues 1–184; sequence CPTPDAPQYA…AKGLVSQHIE (184 aa). The 2'-(S-cysteinyl)-histidine (Cys-His) cross-link spans 12–14; sequence CLH. An intrachain disulfide couples Cys93 to Cys98. Asn142 carries an N-linked (GlcNAc...) asparagine glycan. The unit H stretch occupies residues 185–560; that stretch reads DHDTETLIRK…KPGTGTQLTR (376 aa). His230 contributes to the Cu cation binding site. Cys236 and Cys246 form a disulfide bridge. An N-linked (GlcNAc...) asparagine glycan is attached at Asn240. Positions 247-249 form a cross-link, 2'-(S-cysteinyl)-histidine (Cys-His); it reads CQH. Cu cation contacts are provided by His249, His258, His358, His362, and His389. Intrachain disulfides connect Cys348–Cys415 and Cys476–Cys482.

Belongs to the tyrosinase family. Hemocyanin subfamily. In terms of assembly, decamers of large identical subunits (390 kDa), each containing 8 globular oxygen-binding functional units. The cofactor is Cu(2+).

In terms of biological role, hemocyanins are copper-containing oxygen carriers occurring freely dissolved in the hemolymph of many mollusks and arthropods. The sequence is that of Hemocyanin, units G and H from Sepia officinalis (Common cuttlefish).